Reading from the N-terminus, the 595-residue chain is Aspartate--tRNA(Asp/Asn) ligase (595 aa).

Glutamate 175 is an L-aspartate binding site. The segment at 199–202 (QQYK) is aspartate. Residues arginine 221 and histidine 454 each coordinate L-aspartate. 221–223 (RDE) provides a ligand contact to ATP. Position 488 (glutamate 488) interacts with ATP. An L-aspartate-binding site is contributed by arginine 495. 540-543 (GIDR) lines the ATP pocket.

Belongs to the class-II aminoacyl-tRNA synthetase family. Type 1 subfamily. In terms of assembly, homodimer.

The protein resides in the cytoplasm. The catalysed reaction is tRNA(Asx) + L-aspartate + ATP = L-aspartyl-tRNA(Asx) + AMP + diphosphate. In terms of biological role, aspartyl-tRNA synthetase with relaxed tRNA specificity since it is able to aspartylate not only its cognate tRNA(Asp) but also tRNA(Asn). Reaction proceeds in two steps: L-aspartate is first activated by ATP to form Asp-AMP and then transferred to the acceptor end of tRNA(Asp/Asn). This chain is Aspartate--tRNA(Asp/Asn) ligase, found in Sinorhizobium medicae (strain WSM419) (Ensifer medicae).